Here is a 148-residue protein sequence, read N- to C-terminus: Large ribosomal subunit protein bL9 (148 aa).

It belongs to the bacterial ribosomal protein bL9 family.

In terms of biological role, binds to the 23S rRNA. In Frankia alni (strain DSM 45986 / CECT 9034 / ACN14a), this protein is Large ribosomal subunit protein bL9.